Here is an 83-residue protein sequence, read N- to C-terminus: Putative defensin-like protein 150 (83 aa).

A signal peptide spans 1–25 (MMGKHIQLSFAILIMFTIFVLGAVG). Cystine bridges form between Cys35-Cys83, Cys44-Cys64, Cys49-Cys77, and Cys53-Cys79.

This sequence belongs to the DEFL family.

It localises to the secreted. This chain is Putative defensin-like protein 150 (LCR32), found in Arabidopsis thaliana (Mouse-ear cress).